Here is an 89-residue protein sequence, read N- to C-terminus: Small ribosomal subunit protein uS15 (89 aa).

The protein belongs to the universal ribosomal protein uS15 family. Part of the 30S ribosomal subunit. Forms a bridge to the 50S subunit in the 70S ribosome, contacting the 23S rRNA.

In terms of biological role, one of the primary rRNA binding proteins, it binds directly to 16S rRNA where it helps nucleate assembly of the platform of the 30S subunit by binding and bridging several RNA helices of the 16S rRNA. Functionally, forms an intersubunit bridge (bridge B4) with the 23S rRNA of the 50S subunit in the ribosome. The chain is Small ribosomal subunit protein uS15 from Marinobacter nauticus (strain ATCC 700491 / DSM 11845 / VT8) (Marinobacter aquaeolei).